A 190-amino-acid polypeptide reads, in one-letter code: Ribose 1,5-bisphosphate phosphokinase PhnN (190 aa).

The interval 135–159 (RGREPEPGIGQRLARPDPAPGHQAD) is disordered.

Belongs to the ribose 1,5-bisphosphokinase family.

It carries out the reaction alpha-D-ribose 1,5-bisphosphate + ATP = 5-phospho-alpha-D-ribose 1-diphosphate + ADP. The protein operates within metabolic intermediate biosynthesis; 5-phospho-alpha-D-ribose 1-diphosphate biosynthesis; 5-phospho-alpha-D-ribose 1-diphosphate from D-ribose 5-phosphate (route II): step 3/3. In terms of biological role, catalyzes the phosphorylation of ribose 1,5-bisphosphate to 5-phospho-D-ribosyl alpha-1-diphosphate (PRPP). The sequence is that of Ribose 1,5-bisphosphate phosphokinase PhnN from Pseudofrankia inefficax (strain DSM 45817 / CECT 9037 / DDB 130130 / EuI1c) (Frankia inefficax).